Reading from the N-terminus, the 446-residue chain is Hepatocyte nuclear factor 4-beta (446 aa).

Positions 47–122 (NSFCAICGDR…AGMKKEAVQN (76 aa)) form a DNA-binding region, nuclear receptor. 2 consecutive NR C4-type zinc fingers follow at residues 50–70 (CAIC…CDGC) and 86–110 (CRFS…LRKC). Residues 137 to 366 (NGSLSINVLT…SLLQELLLGG (230 aa)) form the NR LBD domain.

The protein belongs to the nuclear hormone receptor family. NR2 subfamily. In terms of assembly, homodimerization is required for HNF4-alpha to bind to its recognition site. In terms of tissue distribution, expressed in liver, kidney, stomach, intestine, lung, ovary, and testis. Not expressed in fat, muscle and brain.

Its subcellular location is the nucleus. In terms of biological role, transcription factor; binds and activates the promoter for the HNF1-alpha gene. Seems to have a lower DNA binding activity than HNF4-alpha and is a weaker transactivator than the alpha isoform. The protein is Hepatocyte nuclear factor 4-beta (hnf4b) of Xenopus laevis (African clawed frog).